Consider the following 338-residue polypeptide: Aspartate carbamoyltransferase catalytic subunit (338 aa).

Positions 59 and 60 each coordinate carbamoyl phosphate. Lysine 87 serves as a coordination point for L-aspartate. Residues arginine 109, histidine 142, and glutamine 145 each contribute to the carbamoyl phosphate site. The L-aspartate site is built by arginine 182 and arginine 248. The carbamoyl phosphate site is built by glycine 289 and proline 290.

Belongs to the aspartate/ornithine carbamoyltransferase superfamily. ATCase family. In terms of assembly, heterododecamer (2C3:3R2) of six catalytic PyrB chains organized as two trimers (C3), and six regulatory PyrI chains organized as three dimers (R2).

The catalysed reaction is carbamoyl phosphate + L-aspartate = N-carbamoyl-L-aspartate + phosphate + H(+). Its pathway is pyrimidine metabolism; UMP biosynthesis via de novo pathway; (S)-dihydroorotate from bicarbonate: step 2/3. Its function is as follows. Catalyzes the condensation of carbamoyl phosphate and aspartate to form carbamoyl aspartate and inorganic phosphate, the committed step in the de novo pyrimidine nucleotide biosynthesis pathway. This is Aspartate carbamoyltransferase catalytic subunit from Synechococcus elongatus (strain ATCC 33912 / PCC 7942 / FACHB-805) (Anacystis nidulans R2).